The chain runs to 106 residues: uncharacterized protein (106 aa).

A helical membrane pass occupies residues 9-27; it reads ALAALAFTLGLIGLAAWAL. The disordered stretch occupies residues 84 to 106; that stretch reads TPKGPPPASALSPSPVAEPEPVV.

It belongs to the FliO/MopB family.

It localises to the cell membrane. Its subcellular location is the bacterial flagellum basal body. This is an uncharacterized protein from Caulobacter vibrioides (strain ATCC 19089 / CIP 103742 / CB 15) (Caulobacter crescentus).